A 611-amino-acid chain; its full sequence is Solute carrier family 23 member 3 (611 aa).

At Met-1–Cys-52 the chain is on the cytoplasmic side. The chain crosses the membrane as a helical span at residues Leu-53–Leu-73. Residues Leu-74–Gln-88 are Extracellular-facing. A helical membrane pass occupies residues Leu-89–Ser-109. Over Arg-110 to Glu-168 the chain is Cytoplasmic. The chain crosses the membrane as a helical span at residues Val-169–Pro-189. Topologically, residues Gly-190 to Arg-191 are extracellular. The helical transmembrane segment at Val-192–Ala-212 threads the bilayer. Over His-213–Glu-215 the chain is Cytoplasmic. A helical transmembrane segment spans residues Val-216–Val-236. Over Cys-237–Ser-269 the chain is Extracellular. A helical transmembrane segment spans residues Val-270 to Pro-290. Residues Leu-291–Ala-319 lie on the Cytoplasmic side of the membrane. A helical membrane pass occupies residues Leu-320–Leu-340. Over Cys-341–Gly-358 the chain is Extracellular. A helical transmembrane segment spans residues Leu-359 to Ala-379. At Ser-380–Arg-397 the chain is on the cytoplasmic side. Residues Val-398–Gln-417 traverse the membrane as a helical segment. Over Leu-418 to Val-426 the chain is Extracellular. Residues Leu-427–Ala-449 traverse the membrane as a helical segment. The Cytoplasmic segment spans residues Asp-450–Arg-455. A helical membrane pass occupies residues Asn-456–Arg-475. Residues Glu-476–Asp-489 lie on the Extracellular side of the membrane. Residues Met-490–Leu-510 traverse the membrane as a helical segment. The Cytoplasmic portion of the chain corresponds to Glu-511–Gln-611. The interval Pro-574 to Gln-611 is disordered. Residues Ser-596 to Arg-605 show a composition bias toward polar residues.

The protein belongs to the nucleobase:cation symporter-2 (NCS2) (TC 2.A.40) family.

The protein localises to the membrane. The protein resides in the cytoplasm. It catalyses the reaction hypoxanthine(out) + Na(+)(out) = hypoxanthine(in) + Na(+)(in). Its function is as follows. Acts as a sodium-dependent hypoxanthine transporter. May show xanthine-hypoxanthine exchange activity. The polypeptide is Solute carrier family 23 member 3 (Slc23a3) (Mus musculus (Mouse)).